Reading from the N-terminus, the 323-residue chain is Aquaporin-4 (323 aa).

Over 1–36 the chain is Cytoplasmic; sequence MSDGAAARRWGKCGHSCSRESIMVAFKGVWTQAFWK. 2 S-palmitoyl cysteine lipidation sites follow: C13 and C17. Residues 37 to 57 form a helical membrane-spanning segment; the sequence is AVSAEFLATLIFVLLGVGSTI. The Extracellular segment spans residues 58–69; sequence NWGGSENPLPVD. The chain crosses the membrane as a helical span at residues 70 to 89; that stretch reads MVLISLCFGLSIATMVQCFG. Over 90–93 the chain is Cytoplasmic; it reads HISG. An intramembrane region (discontinuously helical) is located at residues 94 to 101; it reads GHINPAVT. The short motif at 97-99 is the NPA 1 element; the sequence is NPA. The Cytoplasmic portion of the chain corresponds to 102 to 115; that stretch reads VAMVCTRKISIAKS. S111 carries the phosphoserine; by PKG modification. The chain crosses the membrane as a helical span at residues 116–136; the sequence is VFYIIAQCLGAIIGAGILYLV. The Extracellular segment spans residues 137 to 155; that stretch reads TPPSVVGGLGVTTVHGNLT. N153 carries an N-linked (GlcNAc...) asparagine glycan. Residues 156–176 traverse the membrane as a helical segment; the sequence is AGHGLLVELIITFQLVFTIFA. The Cytoplasmic portion of the chain corresponds to 177–184; that stretch reads SCDSKRTD. S180 is subject to Phosphoserine; by PKC. The chain crosses the membrane as a helical span at residues 185 to 205; it reads VTGSIALAIGFSVAIGHLFAI. A glycan (N-linked (GlcNAc...) asparagine) is linked at N206. The Extracellular segment spans residues 206 to 208; that stretch reads NYT. The discontinuously helical intramembrane region spans 209–222; that stretch reads GASMNPARSFGPAV. The NPA 2 motif lies at 213–215; sequence NPA. The Extracellular portion of the chain corresponds to 223 to 231; it reads IMGNWANHW. The helical transmembrane segment at 232 to 252 threads the bilayer; it reads IYWVGPIMGAVLAGALYEYVF. Residues 253-323 are Cytoplasmic-facing; sequence CPDVELKRRL…DSSGEVLSSV (71 aa). Phosphoserine occurs at positions 276 and 285. T289 carries the phosphothreonine modification. S321 is subject to Phosphoserine.

This sequence belongs to the MIP/aquaporin (TC 1.A.8) family. Homotetramer. The tetramers can form oligomeric arrays in membranes. The size of the oligomers differs between tissues and is smaller in skeletal muscle than in brain. Interaction between AQP4 oligomeric arrays in close-by cells can contribute to cell-cell adhesion. Part of a complex containing MLC1, TRPV4, HEPACAM and ATP1B1. Post-translationally, phosphorylation by PKC at Ser-180 reduces conductance by 50%. Phosphorylation by PKG at Ser-111 in response to glutamate increases conductance by 40%; this increase is not due to increased presence at the cell membrane. In terms of processing, isoform 2: Palmitoylated on its N-terminal region. Isoform 1: Not palmitoylated. As to expression, detected in brain cortex, especially around cortical blood vessels, and subjacent to pia, with lower levels in parenchymal membranes. Detected in ependymal and astroglial cells in brain. Detected in supporting Hensen's cells, inner sulcus cells and Claudius cells in the inner ear. Detected in skeletal muscle. Detected in gastric parietal cells. Detected in principal cells in collecting ducts in kidney medulla (at protein level). Detected in brain, heart and skeletal muscle.

It is found in the cell membrane. Its subcellular location is the basolateral cell membrane. It localises to the endosome membrane. The protein localises to the sarcolemma. The protein resides in the cell projection. The enzyme catalyses H2O(in) = H2O(out). In terms of biological role, forms a water-specific channel. Plays an important role in brain water homeostasis and in glymphatic solute transport. Required for a normal rate of water exchange across the blood brain interface. Required for normal levels of cerebrospinal fluid influx into the brain cortex and parenchyma along paravascular spaces that surround penetrating arteries, and for normal drainage of interstitial fluid along paravenous drainage pathways. Thereby, it is required for normal clearance of solutes from the brain interstitial fluid, including soluble beta-amyloid peptides derived from APP. Plays a redundant role in urinary water homeostasis and urinary concentrating ability. The sequence is that of Aquaporin-4 (Aqp4) from Mus musculus (Mouse).